We begin with the raw amino-acid sequence, 2320 residues long: Sperm-associated antigen 17 (2320 aa).

Composition is skewed to basic and acidic residues over residues 139–171 (DQQRRENEKKMVEERTKSEKDKGKGKSPKEKKV) and 199–210 (RRGEDDEAKSYI). Disordered regions lie at residues 139-211 (DQQR…SYID), 388-407 (IPEPPPSTAPAPTGKKKAQY), 682-739 (AEQD…SMDQ), 894-928 (SASKIPGPKRSKTNKVSSKTELSDQEKDKEKEKDK), 950-1001 (EERL…AKTL), 1084-1118 (KEKEEKNSEEEEEEEEEKEEVEEKKPKEGEEEKVK), 1191-1221 (QGKGKAKPKGKEKHKDSIKEEELPKEEEKKN), 1334-1367 (SSPDSGPVYTSPELPTSPHNGDLVDSASQPKSET), 1393-1416 (DIIPEVPPPTPVESHIGTWFTTTP), 1983-2028 (KEAS…YENV), and 2080-2101 (TKESVSQRQTENVTRPPTEEPD). Positions 703 to 720 (VTGSTSNSTKPWNSSNRQ) are enriched in polar residues. Positions 865 to 965 (EEAKYQEAKM…EKKAEKKGKD (101 aa)) form a coiled coil. Basic and acidic residues-rich tracts occupy residues 914–928 (ELSDQEKDKEKEKDK) and 950–999 (EERL…EPAK). The segment covering 1090–1103 (NSEEEEEEEEEKEE) has biased composition (acidic residues). 2 stretches are compositionally biased toward basic and acidic residues: residues 1104–1118 (VEEKKPKEGEEEKVK) and 1203–1221 (KHKDSIKEEELPKEEEKKN). Composition is skewed to polar residues over residues 2012 to 2028 (VNKSLQTSSSQNQYENV) and 2082 to 2094 (ESVSQRQTENVTR).

As to quaternary structure, interacts (via the C-terminus) with SPAG6; the interaction probably occurs on polymerized microtubules. Highly expressed in testis, round spermatids, testicular sperm, epididymal sperm and in condensing spermatids (at protein level). Expressed in organs that contain cilia-bearing cells including brain, oviduct, lung, and uterus. Expressed in articular cartilage and bone.

It is found in the cytoplasm. The protein resides in the cytoskeleton. It localises to the flagellum axoneme. Its subcellular location is the cytoplasmic vesicle. The protein localises to the secretory vesicle. It is found in the acrosome. The protein resides in the golgi apparatus. In terms of biological role, component of the central pair apparatus of ciliary axonemes. Plays a critical role in the function and structure of motile cilia. May play a role in endochondral bone formation, most likely because of a function in primary cilia of chondrocytes and osteoblasts. Essential for normal spermatogenesis and male fertility. Required for normal manchette structure, transport of proteins along the manchette microtubules and formation of the sperm head and flagellum. Essential for sperm flagellum development and proper assembly of the respiratory motile cilia central pair apparatus, but not the brain ependymal cilia. In Mus musculus (Mouse), this protein is Sperm-associated antigen 17 (Spag17).